Consider the following 252-residue polypeptide: UPF0246 protein Fjoh_4905 (252 aa).

This sequence belongs to the UPF0246 family.

The chain is UPF0246 protein Fjoh_4905 from Flavobacterium johnsoniae (strain ATCC 17061 / DSM 2064 / JCM 8514 / BCRC 14874 / CCUG 350202 / NBRC 14942 / NCIMB 11054 / UW101) (Cytophaga johnsonae).